A 589-amino-acid chain; its full sequence is 2-succinyl-5-enolpyruvyl-6-hydroxy-3-cyclohexene-1-carboxylate synthase (589 aa).

The tract at residues 198–222 is disordered; that stretch reads DAATTEGAHDSHAPSQPTRGPRKLP.

This sequence belongs to the TPP enzyme family. MenD subfamily. In terms of assembly, homodimer. It depends on Mg(2+) as a cofactor. Mn(2+) is required as a cofactor. The cofactor is thiamine diphosphate.

It catalyses the reaction isochorismate + 2-oxoglutarate + H(+) = 5-enolpyruvoyl-6-hydroxy-2-succinyl-cyclohex-3-ene-1-carboxylate + CO2. It functions in the pathway quinol/quinone metabolism; 1,4-dihydroxy-2-naphthoate biosynthesis; 1,4-dihydroxy-2-naphthoate from chorismate: step 2/7. It participates in quinol/quinone metabolism; menaquinone biosynthesis. Its function is as follows. Catalyzes the thiamine diphosphate-dependent decarboxylation of 2-oxoglutarate and the subsequent addition of the resulting succinic semialdehyde-thiamine pyrophosphate anion to isochorismate to yield 2-succinyl-5-enolpyruvyl-6-hydroxy-3-cyclohexene-1-carboxylate (SEPHCHC). This Corynebacterium jeikeium (strain K411) protein is 2-succinyl-5-enolpyruvyl-6-hydroxy-3-cyclohexene-1-carboxylate synthase.